The primary structure comprises 941 residues: Zinc finger protein su(Hw) (941 aa).

2 disordered regions span residues 1-97 (MSAS…APAA) and 176-211 (ENNNGQEIVVTEDDEDLGEDGDEDGEDSSGKGNSSQ). Residues 47-57 (STTTTTSRTPS) show a composition bias toward low complexity. Residues 185–202 (VTEDDEDLGEDGDEDGED) show a composition bias toward acidic residues. Threonine 186 carries the post-translational modification Phosphothreonine. The C2H2-type 1; atypical zinc-finger motif lies at 220-242 (HVCGKCYKTFRRVQSLKKHLEFC). Residues 290-313 (INCPDCPKSFKTQTSYERHIFITH) form a C2H2-type 2 zinc finger. Residues 319–341 (FPCSICNANLRSEALLALHEEQH) form a C2H2-type 3; atypical zinc finger. C2H2-type zinc fingers lie at residues 348 to 366 (YACKICGKDFTRSYHLKRH), 380 to 402 (MSCKVCDRVFYRLDNLRSHLKQH), 413 to 435 (YMCHTCKNCFYSLSTLNIHIRTH), 441 to 463 (FDCDLCDKKFSALVALKKHRRYH), 469 to 491 (YSCTVCNQAFAVKEVLNRHMKRH), 497 to 519 (HKCDECGKSFIQATQLRTHSKTH), 523 to 545 (FPCEQCDEKFKTEKQLERHVKTH), 553 to 577 (FSCAECKRNFRTPALLKEHMDEGKH), and 596 to 619 (TDCAICDKNFDSSDTLRRHIRTVH). An interaction with mod(mdg4) region spans residues 760-860 (ILTEEDIKLK…PIDDVIEYVL (101 aa)). Positions 864-941 (DQDEGGLDKD…KKPVGEQEKA (78 aa)) are disordered. Composition is skewed to basic and acidic residues over residues 869–880 (GLDKDNESHSGD) and 891–941 (KTNE…QEKA).

In terms of assembly, component of the gypsy chromatin insulator complex, composed of Cp190, mod(mdg4) and su(Hw). The gypsy chromatin insulator complex interacts with Topors via mod(mdg4) and su(Hw). Upon ecdysone stimulation, interacts with Nup98.

The protein resides in the nucleus. It localises to the chromosome. In terms of biological role, component of the gypsy chromatin insulator complex which is required for the function of the gypsy chromatin insulator and other endogenous chromatin insulators. Chromatin insulators are regulatory elements which establish independent domains of transcriptional activity within eukaryotic genomes. Insulators have two defining properties; they can block the communication between an enhancer and a promoter when placed between them and can also buffer transgenes from position effect variegation (PEV). Insulators are proposed to structure the chromatin fiber into independent domains of differing transcriptional potential by promoting the formation of distinct chromatin loops. This chromatin looping may involve the formation of insulator bodies, where homotypic interactions between individual subunits of the insulator complex could promote the clustering of widely spaced insulators at the nuclear periphery. Within the gypsy insulator complex, this protein binds specifically to a region of the gypsy element located 3' of the 5' long terminal repeat (LTR), and may also mediate interaction with other endogenous insulators at sites distinct from those recognized by Cp190. Cooperates with pita and cliff to recruit Cp190 and regulate insulator function at the front-ultraabdominal (Fub) boundary. This chain is Zinc finger protein su(Hw), found in Drosophila melanogaster (Fruit fly).